Reading from the N-terminus, the 132-residue chain is Fatty acid-binding protein type 3 (132 aa).

The protein belongs to the calycin superfamily. Fatty-acid binding protein (FABP) family.

The polypeptide is Fatty acid-binding protein type 3 (Fasciola hepatica (Liver fluke)).